The sequence spans 201 residues: Lipopolysaccharide core heptose(II)-phosphate phosphatase (201 aa).

An N-terminal signal peptide occupies residues 1 to 35 (MLAFTLRFIKNKRYLATLAGALVIIAGLTSQHAWS).

The protein belongs to the phosphoglycerate mutase family. Ais subfamily.

It is found in the periplasm. It participates in bacterial outer membrane biogenesis; lipopolysaccharide metabolism. Catalyzes the dephosphorylation of heptose(II) of the outer membrane lipopolysaccharide core. The polypeptide is Lipopolysaccharide core heptose(II)-phosphate phosphatase (Salmonella schwarzengrund (strain CVM19633)).